The following is a 433-amino-acid chain: Enolase (433 aa).

Gln167 provides a ligand contact to (2R)-2-phosphoglycerate. The active-site Proton donor is the Glu209. Mg(2+) contacts are provided by Asp246, Glu291, and Asp318. The (2R)-2-phosphoglycerate site is built by Lys343, Arg372, Ser373, and Lys394. The active-site Proton acceptor is Lys343.

The protein belongs to the enolase family. As to quaternary structure, component of the RNA degradosome, a multiprotein complex involved in RNA processing and mRNA degradation. It depends on Mg(2+) as a cofactor.

Its subcellular location is the cytoplasm. It localises to the secreted. The protein resides in the cell surface. It catalyses the reaction (2R)-2-phosphoglycerate = phosphoenolpyruvate + H2O. It participates in carbohydrate degradation; glycolysis; pyruvate from D-glyceraldehyde 3-phosphate: step 4/5. Functionally, catalyzes the reversible conversion of 2-phosphoglycerate (2-PG) into phosphoenolpyruvate (PEP). It is essential for the degradation of carbohydrates via glycolysis. The sequence is that of Enolase from Hamiltonella defensa subsp. Acyrthosiphon pisum (strain 5AT).